The sequence spans 125 residues: Holo-[acyl-carrier-protein] synthase (125 aa).

Mg(2+) is bound by residues Asp-8 and Glu-57.

Belongs to the P-Pant transferase superfamily. AcpS family. It depends on Mg(2+) as a cofactor.

Its subcellular location is the cytoplasm. The catalysed reaction is apo-[ACP] + CoA = holo-[ACP] + adenosine 3',5'-bisphosphate + H(+). Transfers the 4'-phosphopantetheine moiety from coenzyme A to a Ser of acyl-carrier-protein. The protein is Holo-[acyl-carrier-protein] synthase of Geotalea daltonii (strain DSM 22248 / JCM 15807 / FRC-32) (Geobacter daltonii).